The sequence spans 600 residues: NADH-quinone oxidoreductase subunit C/D (600 aa).

The NADH dehydrogenase I subunit C stretch occupies residues 1 to 190 (MVNNMTDLTA…DPFELTKAKQ (190 aa)). The NADH dehydrogenase I subunit D stretch occupies residues 214 to 600 (DFMFLNLGPN…IDFVMSDVDR (387 aa)).

It in the N-terminal section; belongs to the complex I 30 kDa subunit family. This sequence in the C-terminal section; belongs to the complex I 49 kDa subunit family. In terms of assembly, NDH-1 is composed of 13 different subunits. Subunits NuoB, CD, E, F, and G constitute the peripheral sector of the complex.

It localises to the cell inner membrane. It carries out the reaction a quinone + NADH + 5 H(+)(in) = a quinol + NAD(+) + 4 H(+)(out). In terms of biological role, NDH-1 shuttles electrons from NADH, via FMN and iron-sulfur (Fe-S) centers, to quinones in the respiratory chain. The immediate electron acceptor for the enzyme in this species is believed to be ubiquinone. Couples the redox reaction to proton translocation (for every two electrons transferred, four hydrogen ions are translocated across the cytoplasmic membrane), and thus conserves the redox energy in a proton gradient. This chain is NADH-quinone oxidoreductase subunit C/D, found in Salmonella paratyphi A (strain ATCC 9150 / SARB42).